We begin with the raw amino-acid sequence, 379 residues long: Queuine tRNA-ribosyltransferase (379 aa).

D94 (proton acceptor) is an active-site residue. Residues 94–98 (DSGGF), D148, Q191, and G218 contribute to the substrate site. The tract at residues 249–255 (GVGSPDA) is RNA binding. The Nucleophile role is filled by D268. The interval 273–277 (TRIAR) is RNA binding; important for wobble base 34 recognition. Zn(2+) is bound by residues C306, C308, C311, and H337.

It belongs to the queuine tRNA-ribosyltransferase family. In terms of assembly, homodimer. Within each dimer, one monomer is responsible for RNA recognition and catalysis, while the other monomer binds to the replacement base PreQ1. It depends on Zn(2+) as a cofactor.

The catalysed reaction is 7-aminomethyl-7-carbaguanine + guanosine(34) in tRNA = 7-aminomethyl-7-carbaguanosine(34) in tRNA + guanine. Its pathway is tRNA modification; tRNA-queuosine biosynthesis. Catalyzes the base-exchange of a guanine (G) residue with the queuine precursor 7-aminomethyl-7-deazaguanine (PreQ1) at position 34 (anticodon wobble position) in tRNAs with GU(N) anticodons (tRNA-Asp, -Asn, -His and -Tyr). Catalysis occurs through a double-displacement mechanism. The nucleophile active site attacks the C1' of nucleotide 34 to detach the guanine base from the RNA, forming a covalent enzyme-RNA intermediate. The proton acceptor active site deprotonates the incoming PreQ1, allowing a nucleophilic attack on the C1' of the ribose to form the product. After dissociation, two additional enzymatic reactions on the tRNA convert PreQ1 to queuine (Q), resulting in the hypermodified nucleoside queuosine (7-(((4,5-cis-dihydroxy-2-cyclopenten-1-yl)amino)methyl)-7-deazaguanosine). The polypeptide is Queuine tRNA-ribosyltransferase (Oceanobacillus iheyensis (strain DSM 14371 / CIP 107618 / JCM 11309 / KCTC 3954 / HTE831)).